The chain runs to 339 residues: Large ribosomal subunit protein uL10 (339 aa).

Residues 300 to 339 (AAAQATPSVEEREEEEKPEEEEEEEEKEEEAIEGLGALFG) form a disordered region. Positions 310 to 331 (EREEEEKPEEEEEEEEKEEEAI) are enriched in acidic residues.

The protein belongs to the universal ribosomal protein uL10 family. In terms of assembly, part of the 50S ribosomal subunit. Forms part of the ribosomal stalk which helps the ribosome interact with GTP-bound translation factors. Forms a heptameric L10(L12)2(L12)2(L12)2 complex, where L10 forms an elongated spine to which the L12 dimers bind in a sequential fashion.

In terms of biological role, forms part of the ribosomal stalk, playing a central role in the interaction of the ribosome with GTP-bound translation factors. The chain is Large ribosomal subunit protein uL10 from Archaeoglobus fulgidus (strain ATCC 49558 / DSM 4304 / JCM 9628 / NBRC 100126 / VC-16).